The sequence spans 333 residues: Aspartate carbamoyltransferase catalytic subunit (333 aa).

Carbamoyl phosphate is bound by residues Arg-61 and Thr-62. Position 89 (Lys-89) interacts with L-aspartate. Carbamoyl phosphate is bound by residues Arg-111, His-144, and Gln-147. L-aspartate-binding residues include Arg-184 and Arg-248. Carbamoyl phosphate-binding residues include Gly-289 and Pro-290.

This sequence belongs to the aspartate/ornithine carbamoyltransferase superfamily. ATCase family. As to quaternary structure, heterododecamer (2C3:3R2) of six catalytic PyrB chains organized as two trimers (C3), and six regulatory PyrI chains organized as three dimers (R2).

It carries out the reaction carbamoyl phosphate + L-aspartate = N-carbamoyl-L-aspartate + phosphate + H(+). It participates in pyrimidine metabolism; UMP biosynthesis via de novo pathway; (S)-dihydroorotate from bicarbonate: step 2/3. Catalyzes the condensation of carbamoyl phosphate and aspartate to form carbamoyl aspartate and inorganic phosphate, the committed step in the de novo pyrimidine nucleotide biosynthesis pathway. The chain is Aspartate carbamoyltransferase catalytic subunit from Trichormus variabilis (strain ATCC 29413 / PCC 7937) (Anabaena variabilis).